The chain runs to 815 residues: Lon protease 1 (815 aa).

The Lon N-terminal domain occupies 12 to 205 (VFVLALRDVV…HILKTIETEI (194 aa)). 358–365 (GPPGVGKT) lines the ATP pocket. Residues 594-775 (TNQIGQVAGL…DEVFKIALES (182 aa)) enclose the Lon proteolytic domain. Catalysis depends on residues Ser681 and Lys724.

Belongs to the peptidase S16 family. Homohexamer. Organized in a ring with a central cavity.

The protein localises to the cytoplasm. It carries out the reaction Hydrolysis of proteins in presence of ATP.. Functionally, ATP-dependent serine protease that mediates the selective degradation of mutant and abnormal proteins as well as certain short-lived regulatory proteins. Required for cellular homeostasis and for survival from DNA damage and developmental changes induced by stress. Degrades polypeptides processively to yield small peptide fragments that are 5 to 10 amino acids long. Binds to DNA in a double-stranded, site-specific manner. The polypeptide is Lon protease 1 (Hydrogenovibrio crunogenus (strain DSM 25203 / XCL-2) (Thiomicrospira crunogena)).